The chain runs to 1431 residues: DNA-directed RNA polymerase subunit beta' (1431 aa).

Positions 66, 68, 81, and 84 each coordinate Zn(2+). Mg(2+) is bound by residues aspartate 470, aspartate 472, and aspartate 474. Zn(2+)-binding residues include cysteine 813, cysteine 887, cysteine 894, and cysteine 897.

This sequence belongs to the RNA polymerase beta' chain family. As to quaternary structure, the RNAP catalytic core consists of 2 alpha, 1 beta, 1 beta' and 1 omega subunit. When a sigma factor is associated with the core the holoenzyme is formed, which can initiate transcription. The cofactor is Mg(2+). Zn(2+) is required as a cofactor.

The catalysed reaction is RNA(n) + a ribonucleoside 5'-triphosphate = RNA(n+1) + diphosphate. In terms of biological role, DNA-dependent RNA polymerase catalyzes the transcription of DNA into RNA using the four ribonucleoside triphosphates as substrates. The polypeptide is DNA-directed RNA polymerase subunit beta' (Parabacteroides distasonis (strain ATCC 8503 / DSM 20701 / CIP 104284 / JCM 5825 / NCTC 11152)).